The following is a 156-amino-acid chain: Probable succinate transporter subunit YjjB (156 aa).

4 consecutive transmembrane segments (helical) span residues 7–27, 54–74, 86–106, and 128–148; these read WALLQDMVLAAIPALGFAMVF, FGMNIELASLVASIMIGVIGI, VFTVAAVIPMFPGISAYTAMI, and FLKASFIVGALSIGLSLPGLW.

The protein belongs to the ThrE exporter (TC 2.A.79) family. The transporter is composed of YjjB and YjjP.

It localises to the cell inner membrane. Involved in succinate export with YjjP. Both proteins are required for export. This is Probable succinate transporter subunit YjjB from Yersinia pseudotuberculosis serotype I (strain IP32953).